Here is a 332-residue protein sequence, read N- to C-terminus: Biotin synthase (332 aa).

The 230-residue stretch at 46–275 (SDIQRASLLS…RARVRLSAGR (230 aa)) folds into the Radical SAM core domain. [4Fe-4S] cluster-binding residues include cysteine 61, cysteine 65, and cysteine 68. The [2Fe-2S] cluster site is built by cysteine 106, cysteine 138, cysteine 198, and arginine 270.

Belongs to the radical SAM superfamily. Biotin synthase family. As to quaternary structure, homodimer. It depends on [4Fe-4S] cluster as a cofactor. Requires [2Fe-2S] cluster as cofactor.

It carries out the reaction (4R,5S)-dethiobiotin + (sulfur carrier)-SH + 2 reduced [2Fe-2S]-[ferredoxin] + 2 S-adenosyl-L-methionine = (sulfur carrier)-H + biotin + 2 5'-deoxyadenosine + 2 L-methionine + 2 oxidized [2Fe-2S]-[ferredoxin]. It participates in cofactor biosynthesis; biotin biosynthesis; biotin from 7,8-diaminononanoate: step 2/2. Its function is as follows. Catalyzes the conversion of dethiobiotin (DTB) to biotin by the insertion of a sulfur atom into dethiobiotin via a radical-based mechanism. The sequence is that of Biotin synthase from Methylobacterium sp. (strain 4-46).